A 512-amino-acid chain; its full sequence is ATP synthase subunit alpha, chloroplastic (512 aa).

170 to 177 (GDRQTGKT) is an ATP binding site.

Belongs to the ATPase alpha/beta chains family. F-type ATPases have 2 components, CF(1) - the catalytic core - and CF(0) - the membrane proton channel. CF(1) has five subunits: alpha(3), beta(3), gamma(1), delta(1), epsilon(1). CF(0) has four main subunits: a, b, b' and c.

It localises to the plastid. The protein localises to the chloroplast thylakoid membrane. The catalysed reaction is ATP + H2O + 4 H(+)(in) = ADP + phosphate + 5 H(+)(out). In terms of biological role, produces ATP from ADP in the presence of a proton gradient across the membrane. The alpha chain is a regulatory subunit. This chain is ATP synthase subunit alpha, chloroplastic, found in Chaetosphaeridium globosum (Charophycean green alga).